Reading from the N-terminus, the 187-residue chain is Large ribosomal subunit protein uL6 (187 aa).

Belongs to the universal ribosomal protein uL6 family. As to quaternary structure, part of the 50S ribosomal subunit.

Functionally, this protein binds to the 23S rRNA, and is important in its secondary structure. It is located near the subunit interface in the base of the L7/L12 stalk, and near the tRNA binding site of the peptidyltransferase center. This chain is Large ribosomal subunit protein uL6, found in Chloroflexus aggregans (strain MD-66 / DSM 9485).